We begin with the raw amino-acid sequence, 207 residues long: Peptidyl-prolyl cis-trans isomerase FKBP16-1, chloroplastic (207 aa).

The 104-residue stretch at 104–207 (GDLVELNYVC…VFEIQLLKVL (104 aa)) folds into the PPIase FKBP-type domain.

This sequence belongs to the FKBP-type PPIase family.

It localises to the plastid. The protein resides in the chloroplast thylakoid lumen. It carries out the reaction [protein]-peptidylproline (omega=180) = [protein]-peptidylproline (omega=0). Functionally, PPIases accelerate the folding of proteins. It catalyzes the cis-trans isomerization of proline imidic peptide bonds in oligopeptides. The chain is Peptidyl-prolyl cis-trans isomerase FKBP16-1, chloroplastic (FKBP16-1) from Arabidopsis thaliana (Mouse-ear cress).